Reading from the N-terminus, the 235-residue chain is Large ribosomal subunit protein uL1 (235 aa).

The protein belongs to the universal ribosomal protein uL1 family. In terms of assembly, part of the 50S ribosomal subunit.

Functionally, binds directly to 23S rRNA. The L1 stalk is quite mobile in the ribosome, and is involved in E site tRNA release. In terms of biological role, protein L1 is also a translational repressor protein, it controls the translation of the L11 operon by binding to its mRNA. This Fervidobacterium nodosum (strain ATCC 35602 / DSM 5306 / Rt17-B1) protein is Large ribosomal subunit protein uL1.